The following is a 492-amino-acid chain: Glutamyl-tRNA(Gln) amidotransferase subunit A (492 aa).

Residues K79 and S154 each act as charge relay system in the active site. Residue S178 is the Acyl-ester intermediate of the active site.

It belongs to the amidase family. GatA subfamily. As to quaternary structure, heterotrimer of A, B and C subunits.

It carries out the reaction L-glutamyl-tRNA(Gln) + L-glutamine + ATP + H2O = L-glutaminyl-tRNA(Gln) + L-glutamate + ADP + phosphate + H(+). In terms of biological role, allows the formation of correctly charged Gln-tRNA(Gln) through the transamidation of misacylated Glu-tRNA(Gln) in organisms which lack glutaminyl-tRNA synthetase. The reaction takes place in the presence of glutamine and ATP through an activated gamma-phospho-Glu-tRNA(Gln). This chain is Glutamyl-tRNA(Gln) amidotransferase subunit A, found in Desulforudis audaxviator (strain MP104C).